A 590-amino-acid chain; its full sequence is Asparagine synthetase [glutamine-hydrolyzing] (590 aa).

The active-site For GATase activity is C2. Residues C2–G185 form the Glutamine amidotransferase type-2 domain. Residues R50–I54, N75–E77, and D98 each bind L-glutamine. An Asparagine synthetase domain is found at P193–P516. ATP contacts are provided by residues L231, V267, and S341–G342.

The enzyme catalyses L-aspartate + L-glutamine + ATP + H2O = L-asparagine + L-glutamate + AMP + diphosphate + H(+). The protein operates within amino-acid biosynthesis; L-asparagine biosynthesis; L-asparagine from L-aspartate (L-Gln route): step 1/1. The chain is Asparagine synthetase [glutamine-hydrolyzing] from Asparagus officinalis (Garden asparagus).